We begin with the raw amino-acid sequence, 346 residues long: Low specificity L-threonine aldolase (346 aa).

K207 is subject to N6-(pyridoxal phosphate)lysine.

This sequence belongs to the threonine aldolase family. As to quaternary structure, homotetramer. The cofactor is pyridoxal 5'-phosphate.

The enzyme catalyses L-threonine = acetaldehyde + glycine. The catalysed reaction is L-allo-threonine = acetaldehyde + glycine. Catalyzes the cleavage of L-allo-threonine and L-threonine to glycine and acetaldehyde. In Pseudomonas aeruginosa (strain ATCC 15692 / DSM 22644 / CIP 104116 / JCM 14847 / LMG 12228 / 1C / PRS 101 / PAO1), this protein is Low specificity L-threonine aldolase (ltaE).